Consider the following 705-residue polypeptide: Polyribonucleotide nucleotidyltransferase (705 aa).

D486 and D492 together coordinate Mg(2+). Residues 553 to 612 (PRIYTMKINPEKIKDVIGKGGSVIRALTDETGTTIEIEDDGTIKIAATDGDKAKHAIRRI) form the KH domain. An S1 motif domain is found at 622-690 (GRIYAGKVTR…RQGRIRLSIK (69 aa)).

This sequence belongs to the polyribonucleotide nucleotidyltransferase family. Component of the RNA degradosome, which is a multiprotein complex involved in RNA processing and mRNA degradation. Mg(2+) is required as a cofactor.

It is found in the cytoplasm. The enzyme catalyses RNA(n+1) + phosphate = RNA(n) + a ribonucleoside 5'-diphosphate. In terms of biological role, involved in mRNA degradation. Catalyzes the phosphorolysis of single-stranded polyribonucleotides processively in the 3'- to 5'-direction. This chain is Polyribonucleotide nucleotidyltransferase, found in Yersinia pseudotuberculosis serotype O:3 (strain YPIII).